Reading from the N-terminus, the 167-residue chain is Ribosome maturation factor RimM (167 aa).

One can recognise a PRC barrel domain in the interval 94–165 (EHEYYYSDII…TIKITPMEGL (72 aa)).

It belongs to the RimM family. Binds ribosomal protein uS19.

The protein localises to the cytoplasm. Functionally, an accessory protein needed during the final step in the assembly of 30S ribosomal subunit, possibly for assembly of the head region. Essential for efficient processing of 16S rRNA. May be needed both before and after RbfA during the maturation of 16S rRNA. It has affinity for free ribosomal 30S subunits but not for 70S ribosomes. This Staphylococcus epidermidis (strain ATCC 12228 / FDA PCI 1200) protein is Ribosome maturation factor RimM.